A 449-amino-acid chain; its full sequence is Chromosomal replication initiator protein DnaA (449 aa).

The interval 1 to 75 (MDTNNDIEKR…EILSQNKVGM (75 aa)) is domain I, interacts with DnaA modulators. Residues 75 to 106 (MHLAHSVDVRIEVASKVHVSDHSNINYKATKS) form a domain II region. The segment at 107–321 (SIKDSYTFEN…GAIIKISVNA (215 aa)) is domain III, AAA+ region. ATP-binding residues include glycine 151, glycine 153, lysine 154, and threonine 155. Residues 322-449 (NLMNAPIDLN…LNELNDKKQH (128 aa)) form a domain IV, binds dsDNA region.

This sequence belongs to the DnaA family. In terms of assembly, oligomerizes as a right-handed, spiral filament on DNA at oriC.

It localises to the cytoplasm. Its function is as follows. Plays an essential role in the initiation and regulation of chromosomal replication. ATP-DnaA binds to the origin of replication (oriC) to initiate formation of the DNA replication initiation complex once per cell cycle. Binds the DnaA box (a 9 base pair repeat at the origin) and separates the double-stranded (ds)DNA. Forms a right-handed helical filament on oriC DNA; dsDNA binds to the exterior of the filament while single-stranded (ss)DNA is stabiized in the filament's interior. The ATP-DnaA-oriC complex binds and stabilizes one strand of the AT-rich DNA unwinding element (DUE), permitting loading of DNA polymerase. After initiation quickly degrades to an ADP-DnaA complex that is not apt for DNA replication. Binds acidic phospholipids. The protein is Chromosomal replication initiator protein DnaA of Helicobacter acinonychis (strain Sheeba).